Reading from the N-terminus, the 314-residue chain is Acetaldehyde dehydrogenase 1 (314 aa).

An NAD(+)-binding site is contributed by 16-19 (SGNI). The active-site Acyl-thioester intermediate is Cys134. NAD(+) contacts are provided by residues 165-173 (SAGPGTRAN) and Asn292.

The protein belongs to the acetaldehyde dehydrogenase family.

The enzyme catalyses acetaldehyde + NAD(+) + CoA = acetyl-CoA + NADH + H(+). In Cupriavidus necator (strain ATCC 17699 / DSM 428 / KCTC 22496 / NCIMB 10442 / H16 / Stanier 337) (Ralstonia eutropha), this protein is Acetaldehyde dehydrogenase 1 (mhpF).